The primary structure comprises 41 residues: Ranatuerin-2PLg (41 aa).

A propeptide spanning residues 1–11 (DDGVEMTEEEV) is cleaved from the precursor. A disulfide bond links C36 and C41.

It belongs to the frog skin active peptide (FSAP) family. Ranatuerin subfamily.

Its subcellular location is the secreted. Its function is as follows. Antimicrobial peptide. This Lithobates palustris (Pickerel frog) protein is Ranatuerin-2PLg.